A 206-amino-acid polypeptide reads, in one-letter code: GTP cyclohydrolase 1 (206 aa).

Residues Cys95, His98, and Cys166 each contribute to the Zn(2+) site.

Belongs to the GTP cyclohydrolase I family. Toroid-shaped homodecamer, composed of two pentamers of five dimers.

The enzyme catalyses GTP + H2O = 7,8-dihydroneopterin 3'-triphosphate + formate + H(+). The protein operates within cofactor biosynthesis; 7,8-dihydroneopterin triphosphate biosynthesis; 7,8-dihydroneopterin triphosphate from GTP: step 1/1. The protein is GTP cyclohydrolase 1 of Bartonella quintana (strain Toulouse) (Rochalimaea quintana).